The following is a 404-amino-acid chain: Cysteine desulfurase IscS (404 aa).

Residues Ala-75 to Thr-76, Asn-155, Gln-183, and Ser-203 to His-205 contribute to the pyridoxal 5'-phosphate site. Lys-206 carries the N6-(pyridoxal phosphate)lysine modification. Thr-243 contributes to the pyridoxal 5'-phosphate binding site. Cys-328 serves as the catalytic Cysteine persulfide intermediate. Cys-328 is a [2Fe-2S] cluster binding site.

This sequence belongs to the class-V pyridoxal-phosphate-dependent aminotransferase family. NifS/IscS subfamily. Homodimer. Forms a heterotetramer with IscU, interacts with other sulfur acceptors. Requires pyridoxal 5'-phosphate as cofactor.

The protein localises to the cytoplasm. The enzyme catalyses (sulfur carrier)-H + L-cysteine = (sulfur carrier)-SH + L-alanine. Its pathway is cofactor biosynthesis; iron-sulfur cluster biosynthesis. In terms of biological role, master enzyme that delivers sulfur to a number of partners involved in Fe-S cluster assembly, tRNA modification or cofactor biosynthesis. Catalyzes the removal of elemental sulfur atoms from cysteine to produce alanine. Functions as a sulfur delivery protein for Fe-S cluster synthesis onto IscU, an Fe-S scaffold assembly protein, as well as other S acceptor proteins. This is Cysteine desulfurase IscS from Buchnera aphidicola subsp. Schizaphis graminum (strain Sg).